Reading from the N-terminus, the 242-residue chain is Probable transcriptional regulatory protein Bphy_2064 (242 aa).

This sequence belongs to the TACO1 family.

It is found in the cytoplasm. The protein is Probable transcriptional regulatory protein Bphy_2064 of Paraburkholderia phymatum (strain DSM 17167 / CIP 108236 / LMG 21445 / STM815) (Burkholderia phymatum).